The following is a 714-amino-acid chain: Fatty acid oxidation complex subunit alpha (714 aa).

The tract at residues 1 to 190 is enoyl-CoA hydratase; that stretch reads MEMASAFTLN…KLGLVDDVVP (190 aa). The tract at residues 306-714 is 3-hydroxyacyl-CoA dehydrogenase; sequence APLNSVGILG…FWKTTATDLQ (409 aa).

In the N-terminal section; belongs to the enoyl-CoA hydratase/isomerase family. This sequence in the central section; belongs to the 3-hydroxyacyl-CoA dehydrogenase family. As to quaternary structure, heterotetramer of two alpha chains (FadJ) and two beta chains (FadI).

The protein resides in the cytoplasm. The enzyme catalyses a (3S)-3-hydroxyacyl-CoA = a (2E)-enoyl-CoA + H2O. It carries out the reaction a 4-saturated-(3S)-3-hydroxyacyl-CoA = a (3E)-enoyl-CoA + H2O. The catalysed reaction is a (3S)-3-hydroxyacyl-CoA + NAD(+) = a 3-oxoacyl-CoA + NADH + H(+). It catalyses the reaction (3S)-3-hydroxybutanoyl-CoA = (3R)-3-hydroxybutanoyl-CoA. It functions in the pathway lipid metabolism; fatty acid beta-oxidation. In terms of biological role, catalyzes the formation of a hydroxyacyl-CoA by addition of water on enoyl-CoA. Also exhibits 3-hydroxyacyl-CoA epimerase and 3-hydroxyacyl-CoA dehydrogenase activities. This Escherichia coli O81 (strain ED1a) protein is Fatty acid oxidation complex subunit alpha.